The primary structure comprises 637 residues: Cell division cycle-related protein res1/sct1 (637 aa).

An HTH APSES-type domain is found at 6 to 112 (IHKITYSGVE…YSGSAFMPMS (107 aa)). Residues 37-58 (ATQILKIAELDKPRRTRILEKF) constitute a DNA-binding region (H-T-H motif). The segment at 114–137 (FTPQSNRKPTEAYRRNSPVKKSFS) is disordered. 2 ANK repeats span residues 236 to 265 (DGHTALHWAAAMGNLEMMHALLQAGANVVA) and 357 to 386 (HGDTALLICARNGAKKCARLLLSFYASSSI).

In terms of assembly, DSC1 contains cdc10 and sct1/res1.

Functionally, acts as a positive regulator of the mitotic cell cycle and as a negative regulator of sexual differentiation. May be involved in the transcriptional regulation of the cdc22 and cdt1 genes. Is an integral component of the DSC1-like complex. The chain is Cell division cycle-related protein res1/sct1 (res1) from Schizosaccharomyces pombe (strain 972 / ATCC 24843) (Fission yeast).